The chain runs to 1811 residues: Protein virilizer homolog (1811 aa).

At A2 the chain carries N-acetylalanine. The tract at residues 132 to 302 is disordered; that stretch reads ISHDRDSPPP…EGDDGYEQIS (171 aa). Phosphoserine occurs at positions 133 and 138. Residues 139 to 152 are compositionally biased toward pro residues; that stretch reads PPPPPPPPPPPQPQ. The span at 160-169 shows a compositional bias: basic and acidic residues; the sequence is KHADGEKEDQ. Position 173 is a phosphoserine (S173). Residues 174 to 190 show a composition bias toward pro residues; sequence PPRPQPRGPRTPPGPPP. T184 carries the phosphothreonine modification. The residue at position 222 (S222) is a Phosphoserine. Polar residues predominate over residues 224–233; sequence DRNSVPQEGQ. Composition is skewed to acidic residues over residues 234 to 267 and 274 to 302; these read YSDE…DEDD and IPDD…EQIS. Y913 is subject to Phosphotyrosine. Residue S1578 is modified to Phosphoserine. Disordered stretches follow at residues 1615–1634 and 1662–1811; these read HVVP…GIRP and KEVV…SFTR. Positions 1688–1697 are enriched in gly residues; sequence GFSGNRGGRG. The residue at position 1707 (T1707) is a Phosphothreonine. R1722 carries the omega-N-methylarginine modification. The span at 1722–1747 shows a compositional bias: polar residues; the sequence is RGSSWSAQNTPRGNYNESRGGQSNFN. Residue R1740 is modified to Asymmetric dimethylarginine; alternate. R1740 carries the omega-N-methylarginine; alternate modification. An asymmetric dimethylarginine mark is found at R1772, R1774, and R1792. Residues 1787–1801 show a composition bias toward gly residues; the sequence is GSGGSRGKFVSGGSG. Residues 1802-1811 are compositionally biased toward basic residues; it reads RGRHVRSFTR.

This sequence belongs to the vir family. In terms of assembly, component of the WMM complex, a N6-methyltransferase complex composed of a catalytic subcomplex, named MAC, and of an associated subcomplex, named MACOM. The MAC subcomplex is composed of METTL3 and METTL14. The MACOM subcomplex is composed of WTAP, ZC3H13, CBLL1/HAKAI, VIRMA, and, in some cases of RBM15 (RBM15 or RBM15B). Interacts with WTAP. Also a component of a MACOM-like complex, named WTAP complex, composed of WTAP, ZC3H13, CBLL1, VIRMA, RBM15, BCLAF1 and THRAP3. Interacts with NUDT21 and CPSF6.

The protein resides in the nucleus speckle. The protein localises to the nucleus. It is found in the nucleoplasm. Its subcellular location is the cytoplasm. Functionally, associated component of the WMM complex, a complex that mediates N6-methyladenosine (m6A) methylation of RNAs, a modification that plays a role in the efficiency of mRNA splicing and RNA processing. Acts as a key regulator of m6A methylation by promoting m6A methylation of mRNAs in the 3'-UTR near the stop codon: recruits the catalytic core components METTL3 and METTL14, thereby guiding m6A methylation at specific sites. Required for mRNA polyadenylation via its role in selective m6A methylation: m6A methylation of mRNAs in the 3'-UTR near the stop codon correlating with alternative polyadenylation (APA). This Mus musculus (Mouse) protein is Protein virilizer homolog.